The sequence spans 409 residues: Cdc42 effector protein 1 (409 aa).

A disordered region spans residues Met1–Gly29. Phosphoserine occurs at positions 19 and 27. Thr34 bears the Phosphothreonine mark. One can recognise a CRIB domain in the interval Ile38–Gly52. Ser39 carries the post-translational modification Phosphoserine. Position 53 is an omega-N-methylarginine (Arg53). A phosphoserine mark is found at Ser65, Ser77, Ser101, Ser113, Ser121, and Ser139. The segment covering Pro167–Gln189 has biased composition (basic and acidic residues). A disordered region spans residues Pro167 to Arg203. Residues Ser191, Ser205, Ser207, and Ser210 each carry the phosphoserine modification. Repeat copies occupy residues Pro235–Val241, Pro242–Ala248, and Pro255–Ala261. Residues Pro235–Pro284 form a 3 X 7 AA tandem repeats of [PT]-[AT]-A-[ENT]-[PT]-[PTS]-[AG] region. Disordered regions lie at residues Ala237 to Pro260 and Pro282 to His329. Residues Thr243–Lys258 show a composition bias toward pro residues. Residues Pro282–Ser291 show a composition bias toward low complexity. Phosphoserine is present on residues Ser312, Ser332, Ser368, and Ser371.

It belongs to the BORG/CEP family. Interacts with RHOQ and CDC42, in a GTP-dependent manner.

The protein resides in the endomembrane system. It localises to the cytoplasm. It is found in the cytoskeleton. In terms of biological role, probably involved in the organization of the actin cytoskeleton. Induced membrane extensions in fibroblasts. This is Cdc42 effector protein 1 (Cdc42ep1) from Mus musculus (Mouse).